Consider the following 100-residue polypeptide: Large ribosomal subunit protein uL23 (100 aa).

Belongs to the universal ribosomal protein uL23 family. Part of the 50S ribosomal subunit. Contacts protein L29, and trigger factor when it is bound to the ribosome.

Its function is as follows. One of the early assembly proteins it binds 23S rRNA. One of the proteins that surrounds the polypeptide exit tunnel on the outside of the ribosome. Forms the main docking site for trigger factor binding to the ribosome. This is Large ribosomal subunit protein uL23 from Corynebacterium aurimucosum (strain ATCC 700975 / DSM 44827 / CIP 107346 / CN-1) (Corynebacterium nigricans).